Here is a 160-residue protein sequence, read N- to C-terminus: Transcription elongation factor GreA (160 aa).

Residues 10–37 are a coiled coil; that stretch reads TLDGKAKLENELQELKTVKRKEVVERIK.

Belongs to the GreA/GreB family.

Its function is as follows. Necessary for efficient RNA polymerase transcription elongation past template-encoded arresting sites. The arresting sites in DNA have the property of trapping a certain fraction of elongating RNA polymerases that pass through, resulting in locked ternary complexes. Cleavage of the nascent transcript by cleavage factors such as GreA or GreB allows the resumption of elongation from the new 3'terminus. GreA releases sequences of 2 to 3 nucleotides. The protein is Transcription elongation factor GreA of Listeria innocua serovar 6a (strain ATCC BAA-680 / CLIP 11262).